A 244-amino-acid chain; its full sequence is 5-oxoprolinase subunit A (244 aa).

It belongs to the LamB/PxpA family. Forms a complex composed of PxpA, PxpB and PxpC.

The enzyme catalyses 5-oxo-L-proline + ATP + 2 H2O = L-glutamate + ADP + phosphate + H(+). Functionally, catalyzes the cleavage of 5-oxoproline to form L-glutamate coupled to the hydrolysis of ATP to ADP and inorganic phosphate. This chain is 5-oxoprolinase subunit A, found in Shigella flexneri.